The sequence spans 266 residues: Glutamate racemase (266 aa).

Residues 9–10 and 41–42 contribute to the substrate site; these read DS and YG. The Proton donor/acceptor role is filled by Cys-73. 74–75 is a binding site for substrate; that stretch reads NS. Catalysis depends on Cys-183, which acts as the Proton donor/acceptor. 184–185 is a substrate binding site; the sequence is TH.

The protein belongs to the aspartate/glutamate racemases family.

It carries out the reaction L-glutamate = D-glutamate. It functions in the pathway cell wall biogenesis; peptidoglycan biosynthesis. Its function is as follows. Provides the (R)-glutamate required for cell wall biosynthesis. The sequence is that of Glutamate racemase from Shewanella halifaxensis (strain HAW-EB4).